Reading from the N-terminus, the 482-residue chain is Glutamyl-tRNA(Gln) amidotransferase subunit A (482 aa).

Catalysis depends on charge relay system residues K75 and S150. S174 functions as the Acyl-ester intermediate in the catalytic mechanism.

The protein belongs to the amidase family. GatA subfamily. Heterotrimer of A, B and C subunits.

The catalysed reaction is L-glutamyl-tRNA(Gln) + L-glutamine + ATP + H2O = L-glutaminyl-tRNA(Gln) + L-glutamate + ADP + phosphate + H(+). In terms of biological role, allows the formation of correctly charged Gln-tRNA(Gln) through the transamidation of misacylated Glu-tRNA(Gln) in organisms which lack glutaminyl-tRNA synthetase. The reaction takes place in the presence of glutamine and ATP through an activated gamma-phospho-Glu-tRNA(Gln). In Acaryochloris marina (strain MBIC 11017), this protein is Glutamyl-tRNA(Gln) amidotransferase subunit A.